The primary structure comprises 160 residues: Serine-protein kinase RsbW (160 aa).

This sequence belongs to the anti-sigma-factor family.

The enzyme catalyses L-seryl-[protein] + ATP = O-phospho-L-seryl-[protein] + ADP + H(+). It carries out the reaction L-threonyl-[protein] + ATP = O-phospho-L-threonyl-[protein] + ADP + H(+). Its function is as follows. Negative regulator of sigma-B activity. Phosphorylates and inactivates its specific antagonist protein, RsbV. Upon phosphorylation of RsbV, RsbW is released and binds to sigma-B, thereby blocking its ability to form an RNA polymerase holoenzyme (E-sigma-B). This is Serine-protein kinase RsbW from Bacillus velezensis (strain DSM 23117 / BGSC 10A6 / LMG 26770 / FZB42) (Bacillus amyloliquefaciens subsp. plantarum).